Consider the following 558-residue polypeptide: Hsp70-Hsp90 organizing protein 3 (558 aa).

4 TPR repeats span residues 2–35 (AEEAKSKGNAAFSSGDYATAITHFTEAINLSPTN), 37–69 (ILYSNRSASYASLHRYEEALSDAKKTIELKPDW), 70–103 (SKGYSRLGAAFIGLSKFDEAVDSYKKGLEIDPSN), and 136–173 (EKLTADPGTRVYLEQDDFVKTMKEIQRNPNNLNLYMKD). The region spanning 131–170 (GKEMWEKLTADPGTRVYLEQDDFVKTMKEIQRNPNNLNLY) is the STI1 1 domain. The segment at 191-232 (SSGEDTEMKEADERKEPEPEMEPMELTEEERQKKERKEKALK) is disordered. A compositionally biased stretch (basic and acidic residues) spans 196–208 (TEMKEADERKEPE). The segment covering 209 to 218 (PEMEPMELTE) has biased composition (acidic residues). The segment covering 219 to 232 (EERQKKERKEKALK) has biased composition (basic and acidic residues). Positions 227 to 244 (KEKALKEKGEGNVAYKKK) match the Bipartite nuclear localization signal motif. TPR repeat units lie at residues 230–263 (ALKEKGEGNVAYKKKDFGRAVEHYTKAMELDDED), 265–297 (SYLTNRAAVYLEMGKYEECIEDCDKAVERGREL), 305–342 (ARALTRKGSALVKMARCSKDFEPAIETFQKALTEHRNP), 369–402 (AEEEREKGNGFFKEQKYPEAVKHYSEAIKRNPND), 404–436 (RAYSNRAACYTKLGALPEGLKDAEKCIELDPSF), and 437–470 (TKGYSRKGAIQFFMKEYDKAMETYQEGLKHDPKN). Positions 507 to 546 (DPEVQNILSDPVMRQVLVDFQENPKAAQEHMKNPMVMNKI) constitute an STI1 2 domain.

As to quaternary structure, co-chaperone that forms a complex with HSP70 and HSP90 and preproteins (e.g. chloroplast preproteins). Phosphorylated. In terms of processing, acetylated.

It is found in the cytoplasm. The protein localises to the nucleus. Its function is as follows. Mediates the association of the molecular chaperones HSP70 and HSP90. Mediates nuclear encoded chloroplast preproteins binding to HSP90 prior to chloroplastic sorting. Involved in acclimation to heat. The chain is Hsp70-Hsp90 organizing protein 3 (HOP3) from Arabidopsis thaliana (Mouse-ear cress).